The sequence spans 384 residues: Queuine tRNA-ribosyltransferase (384 aa).

The active-site Proton acceptor is Asp-93. Substrate-binding positions include 93–97 (DSGGF), Asp-147, Gln-202, and Gly-229. The segment at 260–266 (GVGYPEE) is RNA binding. Asp-279 acts as the Nucleophile in catalysis. Residues 284–288 (TRAAR) are RNA binding; important for wobble base 34 recognition. Zn(2+) contacts are provided by Cys-317, Cys-319, Cys-322, and His-348.

The protein belongs to the queuine tRNA-ribosyltransferase family. As to quaternary structure, homodimer. Within each dimer, one monomer is responsible for RNA recognition and catalysis, while the other monomer binds to the replacement base PreQ1. It depends on Zn(2+) as a cofactor.

The enzyme catalyses 7-aminomethyl-7-carbaguanine + guanosine(34) in tRNA = 7-aminomethyl-7-carbaguanosine(34) in tRNA + guanine. The protein operates within tRNA modification; tRNA-queuosine biosynthesis. Its function is as follows. Catalyzes the base-exchange of a guanine (G) residue with the queuine precursor 7-aminomethyl-7-deazaguanine (PreQ1) at position 34 (anticodon wobble position) in tRNAs with GU(N) anticodons (tRNA-Asp, -Asn, -His and -Tyr). Catalysis occurs through a double-displacement mechanism. The nucleophile active site attacks the C1' of nucleotide 34 to detach the guanine base from the RNA, forming a covalent enzyme-RNA intermediate. The proton acceptor active site deprotonates the incoming PreQ1, allowing a nucleophilic attack on the C1' of the ribose to form the product. After dissociation, two additional enzymatic reactions on the tRNA convert PreQ1 to queuine (Q), resulting in the hypermodified nucleoside queuosine (7-(((4,5-cis-dihydroxy-2-cyclopenten-1-yl)amino)methyl)-7-deazaguanosine). This Koribacter versatilis (strain Ellin345) protein is Queuine tRNA-ribosyltransferase.